The following is a 528-amino-acid chain: Pentatricopeptide repeat-containing protein At1g62914, mitochondrial (528 aa).

The transit peptide at 1–20 directs the protein to the mitochondrion; the sequence is MLAKISSSAKRFVHRSLVVR. PPR repeat units lie at residues 77–111, 112–146, 147–181, 182–216, 217–251, 252–286, 287–321, 322–356, 357–391, 392–426, 427–461, 462–496, and 497–528; these read SIIE…GISH, NLYT…GYEP, DIVT…GYKP, DTVT…GCQP, DLVT…KIEA, NVVI…GVRP, NVIT…KINP, NLVT…SIDP, NIFT…DCLP, NVVT…GLVG, NTVT…GVHP, NILT…TMEP, and DIYT…ALKE.

Belongs to the PPR family. P subfamily.

Its subcellular location is the mitochondrion. The sequence is that of Pentatricopeptide repeat-containing protein At1g62914, mitochondrial from Arabidopsis thaliana (Mouse-ear cress).